A 959-amino-acid polypeptide reads, in one-letter code: General transcription factor II-I repeat domain-containing protein 1 (959 aa).

Residues Lys27 and Lys94 each participate in a glycyl lysine isopeptide (Lys-Gly) (interchain with G-Cter in SUMO2) cross-link. A compositionally biased stretch (basic and acidic residues) spans 96–106; the sequence is PEAEHPKKVQR. Residues 96–117 are disordered; the sequence is PEAEHPKKVQRGEGGGRSLPRS. One copy of the GTF2I-like 1 repeat lies at 119 to 213; that stretch reads LEHGSDVYLL…LEDGGRDSKA (95 aa). Glycyl lysine isopeptide (Lys-Gly) (interchain with G-Cter in SUMO2) cross-links involve residues Lys184, Lys212, Lys225, Lys238, Lys271, Lys294, Lys308, Lys337, Lys436, Lys439, and Lys443. Residues 230 to 250 form a disordered region; the sequence is CGLHGQAPKVPPQDLPPTATS. Residues 342–436 form a GTF2I-like 2 repeat; that stretch reads IKETEDINTL…FDERIFTGNK (95 aa). Residue Ser448 is modified to Phosphoserine. A disordered region spans residues 468–492; that stretch reads NARSDKGSMSEDCGPGTSGELGGLR. The stretch at 556 to 650 is one GTF2I-like 3 repeat; the sequence is DSHGDVIRPL…ELLTEGVKEP (95 aa). Glycyl lysine isopeptide (Lys-Gly) (interchain with G-Cter in SUMO2) cross-links involve residues Lys567, Lys579, Lys588, Lys622, Lys638, and Lys648. At Ser654 the chain carries Phosphoserine. The segment at 654–679 is disordered; sequence SQGTASSLGFSPPALPPERDSGDPLV. Glycyl lysine isopeptide (Lys-Gly) (interchain with G-Cter in SUMO2) cross-links involve residues Pro669, Pro670, Asp680, and Lys684. Gln686 is modified (phosphoserine). GTF2I-like repeat units lie at residues 696-790 and 793-887; these read LSRI…KPDE and ANRL…ICND. Glycyl lysine isopeptide (Lys-Gly) (interchain with G-Cter in SUMO2) cross-links involve residues Ile701, Lys724, Lys732, Lys772, Lys774, Lys787, Lys829, Lys889, and Lys893. Positions 892 to 927 are disordered; the sequence is AKDSSIPKRKRKRVSEGNSVSSSSSSSSSSSSNPDS. The short motif at 898–905 is the Nuclear localization signal element; it reads PKRKRKRV. Positions 910–923 are enriched in low complexity; it reads SVSSSSSSSSSSSS.

It belongs to the TFII-I family. Interacts with the retinoblastoma protein (RB1) via its C-terminus. In terms of tissue distribution, highly expressed in adult skeletal muscle, heart, fibroblast, bone and fetal tissues. Expressed at lower levels in all other tissues tested.

It localises to the nucleus. In terms of biological role, may be a transcription regulator involved in cell-cycle progression and skeletal muscle differentiation. May repress GTF2I transcriptional functions, by preventing its nuclear residency, or by inhibiting its transcriptional activation. May contribute to slow-twitch fiber type specificity during myogenesis and in regenerating muscles. Binds troponin I slow-muscle fiber enhancer (USE B1). Binds specifically and with high affinity to the EFG sequences derived from the early enhancer of HOXC8. This Homo sapiens (Human) protein is General transcription factor II-I repeat domain-containing protein 1 (GTF2IRD1).